The following is a 590-amino-acid chain: Aspartate--tRNA(Asp/Asn) ligase (590 aa).

L-aspartate is bound at residue Glu175. Residues 199 to 202 (QQYK) form an aspartate region. Residues Arg221 and His450 each coordinate L-aspartate. 221–223 (RDE) is a binding site for ATP. Glu484 serves as a coordination point for ATP. L-aspartate is bound at residue Arg491. 536–539 (GVDR) lines the ATP pocket.

Belongs to the class-II aminoacyl-tRNA synthetase family. Type 1 subfamily. Homodimer.

Its subcellular location is the cytoplasm. It carries out the reaction tRNA(Asx) + L-aspartate + ATP = L-aspartyl-tRNA(Asx) + AMP + diphosphate. Aspartyl-tRNA synthetase with relaxed tRNA specificity since it is able to aspartylate not only its cognate tRNA(Asp) but also tRNA(Asn). Reaction proceeds in two steps: L-aspartate is first activated by ATP to form Asp-AMP and then transferred to the acceptor end of tRNA(Asp/Asn). The protein is Aspartate--tRNA(Asp/Asn) ligase of Rhodopseudomonas palustris (strain BisB18).